The following is a 130-amino-acid chain: MAQVQYAGTGRRKNAVARVRLVPGTGKITVNGREVESYIPHADMRLVINQPFAATQTEGSYDTLVNVNGGGVSGQAGAIRHGIARALLQVDPDFRSALKRAGLLTRDARMVERKKPGLKKARKASQFSKR.

The disordered stretch occupies residues 111-130; the sequence is VERKKPGLKKARKASQFSKR. The span at 116–130 shows a compositional bias: basic residues; that stretch reads PGLKKARKASQFSKR.

It belongs to the universal ribosomal protein uS9 family.

The sequence is that of Small ribosomal subunit protein uS9 from Lactococcus lactis subsp. lactis (strain IL1403) (Streptococcus lactis).